We begin with the raw amino-acid sequence, 369 residues long: Anhydro-N-acetylmuramic acid kinase (369 aa).

12 to 19 (GTSLDGVD) provides a ligand contact to ATP.

Belongs to the anhydro-N-acetylmuramic acid kinase family.

The catalysed reaction is 1,6-anhydro-N-acetyl-beta-muramate + ATP + H2O = N-acetyl-D-muramate 6-phosphate + ADP + H(+). It participates in amino-sugar metabolism; 1,6-anhydro-N-acetylmuramate degradation. Its pathway is cell wall biogenesis; peptidoglycan recycling. Functionally, catalyzes the specific phosphorylation of 1,6-anhydro-N-acetylmuramic acid (anhMurNAc) with the simultaneous cleavage of the 1,6-anhydro ring, generating MurNAc-6-P. Is required for the utilization of anhMurNAc either imported from the medium or derived from its own cell wall murein, and thus plays a role in cell wall recycling. In Actinobacillus pleuropneumoniae serotype 3 (strain JL03), this protein is Anhydro-N-acetylmuramic acid kinase.